Reading from the N-terminus, the 196-residue chain is Charged multivesicular body protein 1a (196 aa).

Positions 5 to 41 (LFQLKFTAKQLEKLAKKAEKDSNTEQAKVKKALQQKN) form a coiled coil. Positions 170-181 (QGASSVGESSTR) are enriched in polar residues. The disordered stretch occupies residues 170-196 (QGASSVGESSTRTQEDQLSRRLASLRN). The short motif at 185 to 195 (DQLSRRLASLR) is the MIT-interacting motif element.

It belongs to the SNF7 family. Probable peripherally associated component of the endosomal sorting required for transport complex III (ESCRT-III).

Its subcellular location is the cytoplasm. It localises to the endosome membrane. In terms of biological role, probable peripherally associated component of the endosomal sorting required for transport complex III (ESCRT-III) which is involved in multivesicular bodies (MVBs) formation and sorting of endosomal cargo proteins into MVBs. MVBs contain intraluminal vesicles (ILVs) that are generated by invagination and scission from the limiting membrane of the endosome and mostly are delivered to lysosomes enabling degradation of membrane proteins, such as stimulated growth factor receptors, lysosomal enzymes and lipids. The protein is Charged multivesicular body protein 1a (chmp1a) of Xenopus laevis (African clawed frog).